We begin with the raw amino-acid sequence, 121 residues long: Large ribosomal subunit protein uL18c (121 aa).

It belongs to the universal ribosomal protein uL18 family. Part of the 50S ribosomal subunit; contacts the 5S rRNA.

It is found in the plastid. The protein localises to the cyanelle. Functionally, binds 5S rRNA, forms part of the central protuberance of the 50S subunit. The protein is Large ribosomal subunit protein uL18c (rpl18) of Cyanophora paradoxa.